The following is a 580-amino-acid chain: F-box only protein 24 (580 aa).

An F-box domain is found at proline 36–isoleucine 82. The RCC1 repeat unit spans residues glycine 376 to serine 425.

As to quaternary structure, directly interacts with SKP1 and CUL1.

Its function is as follows. Substrate-recognition component of the SCF (SKP1-CUL1-F-box protein)-type E3 ubiquitin ligase complex. The polypeptide is F-box only protein 24 (FBXO24) (Homo sapiens (Human)).